A 460-amino-acid polypeptide reads, in one-letter code: Pyruvate dehydrogenase E1 component subunit beta (460 aa).

The 77-residue stretch at 2–78 (PVEILMPALS…KVNTPIAVLL (77 aa)) folds into the Lipoyl-binding domain. Lysine 43 bears the N6-lipoyllysine mark. A disordered region spans residues 91–131 (KTEAPKAETPKPAAAEAPAASAAPVAAQPKADVPSDPAIPA). Over residues 100 to 121 (PKPAAAEAPAASAAPVAAQPKA) the composition is skewed to low complexity. Thiamine diphosphate is bound at residue glutamate 194.

As to quaternary structure, heterodimer of an alpha and a beta chain. It depends on (R)-lipoate as a cofactor. Thiamine diphosphate serves as cofactor.

The enzyme catalyses N(6)-[(R)-lipoyl]-L-lysyl-[protein] + pyruvate + H(+) = N(6)-[(R)-S(8)-acetyldihydrolipoyl]-L-lysyl-[protein] + CO2. Its function is as follows. The pyruvate dehydrogenase complex catalyzes the overall conversion of pyruvate to acetyl-CoA and CO(2). It contains multiple copies of three enzymatic components: pyruvate dehydrogenase (E1), dihydrolipoamide acetyltransferase (E2) and lipoamide dehydrogenase (E3). This chain is Pyruvate dehydrogenase E1 component subunit beta (pdhB), found in Rhizobium meliloti (strain 1021) (Ensifer meliloti).